The following is a 401-amino-acid chain: Argininosuccinate synthase (401 aa).

ATP is bound at residue Ala-8–Thr-16. Residue Tyr-87 participates in L-citrulline binding. Residue Gly-117 coordinates ATP. L-aspartate is bound by residues Thr-119, Asn-123, and Asp-124. Asn-123 is a binding site for L-citrulline. The L-citrulline site is built by Arg-127, Ser-175, Glu-259, and Tyr-271.

This sequence belongs to the argininosuccinate synthase family. Type 1 subfamily. As to quaternary structure, homotetramer.

The protein resides in the cytoplasm. The catalysed reaction is L-citrulline + L-aspartate + ATP = 2-(N(omega)-L-arginino)succinate + AMP + diphosphate + H(+). The protein operates within amino-acid biosynthesis; L-arginine biosynthesis; L-arginine from L-ornithine and carbamoyl phosphate: step 2/3. This chain is Argininosuccinate synthase, found in Corynebacterium glutamicum (strain ATCC 13032 / DSM 20300 / JCM 1318 / BCRC 11384 / CCUG 27702 / LMG 3730 / NBRC 12168 / NCIMB 10025 / NRRL B-2784 / 534).